Consider the following 460-residue polypeptide: Equilibrative nucleoside transporter 1 (460 aa).

The Cytoplasmic portion of the chain corresponds to 1–12; sequence MTTSHQPQDRYK. A helical transmembrane segment spans residues 13–29; the sequence is AVWLIFFVLGLGTLLPW. The Extracellular portion of the chain corresponds to 30–82; that stretch reads NFFMTATKYFTNRLDVSQNVSSDTDQSCESTKALADPTVALPARSSLSAIFNN. N-linked (GlcNAc...) asparagine glycosylation occurs at Asn-48. Residues 83–107 form a helical membrane-spanning segment; the sequence is VMTLCAMLPLLVFTCLNSFLHQRIS. At 108-111 the chain is on the cytoplasmic side; sequence QSVR. The chain crosses the membrane as a helical span at residues 112 to 130; sequence ILGSLLAILLVFLVTAALV. The Extracellular segment spans residues 131-138; the sequence is KVEMDALI. Residues 139–157 form a helical membrane-spanning segment; that stretch reads FFVITMIKIVLINSFGAIL. Residues 158-174 lie on the Cytoplasmic side of the membrane; the sequence is QASLFGLAGVLPANYTA. Residues 175 to 199 traverse the membrane as a helical segment; that stretch reads PIMSGQGLAGFFTSVAMICAIASGS. The Extracellular segment spans residues 200-206; that stretch reads ELSESAF. A helical membrane pass occupies residues 207–227; sequence GYFITACAVVILAILCYLALP. Residues 228-291 lie on the Cytoplasmic side of the membrane; that stretch reads RTEFYRHYLQ…IKAILKSICV (64 aa). Phosphoserine is present on Ser-254. Residues 255-266 are compositionally biased toward basic and acidic residues; that stretch reads KGEEPKGRREES. Residues 255–277 are disordered; it reads KGEEPKGRREESGVPGPNSPPTN. Ser-273 bears the Phosphoserine mark. The helical transmembrane segment at 292 to 311 threads the bilayer; the sequence is PALSVCFIFTVTIGLFPAVT. The Extracellular segment spans residues 312-323; sequence AEVESSIAGTSP. Residues 324-342 form a helical membrane-spanning segment; it reads WKSYFIPVACFLNFNVFDW. At 343–359 the chain is on the cytoplasmic side; it reads LGRSLTAVCMWPGQDSR. Residues 360–378 traverse the membrane as a helical segment; sequence WLPVLVASRIVFIPLLMLC. The Extracellular segment spans residues 379–397; that stretch reads NVKARHCGAQRHHFVFKHD. A helical transmembrane segment spans residues 398–417; that stretch reads AWFIAFMAAFAFSNGYLASL. Residues 418-435 are Cytoplasmic-facing; that stretch reads CMCFGPKKVKPAEAETAG. Residues 436-456 traverse the membrane as a helical segment; that stretch reads NIMSFFLCLGLALGAVLSFLL. The Extracellular segment spans residues 457–460; sequence RALV.

This sequence belongs to the SLC29A/ENT transporter (TC 2.A.57) family. As to quaternary structure, identified in a complex with STOM. Post-translationally, glycosylated. In terms of tissue distribution, highly expressed in heart, spleen, lung, liver and testis. Lower level of expression in brain and kidney. Expressed in adipose tissues, brown adipocytes expressing significantly higher amounts than white adipocytes. Expressed in seminiferous tubules.

Its subcellular location is the basolateral cell membrane. It localises to the apical cell membrane. The protein localises to the cell membrane. The catalysed reaction is adenosine(in) = adenosine(out). The enzyme catalyses guanosine(in) = guanosine(out). It catalyses the reaction inosine(in) = inosine(out). It carries out the reaction uridine(out) = uridine(in). The catalysed reaction is thymidine(in) = thymidine(out). The enzyme catalyses cytidine(in) = cytidine(out). It catalyses the reaction adenine(out) = adenine(in). It carries out the reaction guanine(out) = guanine(in). The catalysed reaction is thymine(out) = thymine(in). The enzyme catalyses uracil(in) = uracil(out). It catalyses the reaction hypoxanthine(out) = hypoxanthine(in). Transporter activity is sensitive to low concentrations of the inhibitor nitrobenzylmercaptopurine riboside (NBMPR). Functionally, uniporter involved in the facilitative transport of nucleosides and nucleobases, and contributes to maintaining their cellular homeostasis. Functions as a Na(+)-independent transporter. Involved in the transport of nucleosides such as adenosine, guanosine, inosine, uridine, thymidine and cytidine. Also transports purine (hypoxanthine, adenine, guanine) and pyrimidine nucleobases (thymine, uracil). Mediates basolateral nucleoside uptake into Sertoli cells, thereby regulating the transport of nucleosides in testis across the blood-testis-barrier. Regulates inosine levels in brown adipocytes tissues (BAT) and extracellular inosine levels, which controls BAT-dependent energy expenditure. The chain is Equilibrative nucleoside transporter 1 from Mus musculus (Mouse).